We begin with the raw amino-acid sequence, 264 residues long: 3-methyl-2-oxobutanoate hydroxymethyltransferase (264 aa).

Mg(2+)-binding residues include Asp-45 and Asp-84. 3-methyl-2-oxobutanoate contacts are provided by residues 45-46, Asp-84, and Lys-112; that span reads DS. Position 114 (Glu-114) interacts with Mg(2+). The Proton acceptor role is filled by Glu-181.

This sequence belongs to the PanB family. Homodecamer; pentamer of dimers. Mg(2+) is required as a cofactor.

The protein resides in the cytoplasm. The enzyme catalyses 3-methyl-2-oxobutanoate + (6R)-5,10-methylene-5,6,7,8-tetrahydrofolate + H2O = 2-dehydropantoate + (6S)-5,6,7,8-tetrahydrofolate. It participates in cofactor biosynthesis; (R)-pantothenate biosynthesis; (R)-pantoate from 3-methyl-2-oxobutanoate: step 1/2. In terms of biological role, catalyzes the reversible reaction in which hydroxymethyl group from 5,10-methylenetetrahydrofolate is transferred onto alpha-ketoisovalerate to form ketopantoate. The polypeptide is 3-methyl-2-oxobutanoate hydroxymethyltransferase (Escherichia fergusonii (strain ATCC 35469 / DSM 13698 / CCUG 18766 / IAM 14443 / JCM 21226 / LMG 7866 / NBRC 102419 / NCTC 12128 / CDC 0568-73)).